The sequence spans 331 residues: D-alanine--D-alanine ligase (331 aa).

The ATP-grasp domain maps to 121–327 (KLWYDALGIP…FSQFLENCVR (207 aa)). Position 151 to 206 (151 to 206 (AFESWGKVFVKAARQGSSVGCYQVNQVEELSEAINKAFTFSDQVLIEKSVVPRELE)) interacts with ATP. Asp-281, Glu-294, and Asn-296 together coordinate Mg(2+).

Belongs to the D-alanine--D-alanine ligase family. Mg(2+) serves as cofactor. The cofactor is Mn(2+).

The protein localises to the cytoplasm. It carries out the reaction 2 D-alanine + ATP = D-alanyl-D-alanine + ADP + phosphate + H(+). The protein operates within cell wall biogenesis; peptidoglycan biosynthesis. Its function is as follows. Cell wall formation. The sequence is that of D-alanine--D-alanine ligase from Vibrio atlanticus (strain LGP32) (Vibrio splendidus (strain Mel32)).